Reading from the N-terminus, the 59-residue chain is Inner kinetochore subunit fta6 (59 aa).

Component of the inner kinetochore constitutive centromere-associated network (CCAN) (also known as central kinetochore Sim4 complex in fission yeast), which is composed of at least cnl2, cnp3, cnp20, fta1, fta2, fta3, fta4, fta6, fta7, mal2, mhf1, mhf2, mis6, mis15, mis17, sim4 and wip1.

The protein localises to the nucleus. Its subcellular location is the chromosome. It localises to the centromere. It is found in the kinetochore. The protein resides in the cytoplasm. The protein localises to the cytoskeleton. Its subcellular location is the microtubule organizing center. It localises to the spindle pole body. Component of the kinetochore, a multiprotein complex that assembles on centromeric DNA and attaches chromosomes to spindle microtubules, mediating chromosome segregation and sister chromatid segregation during meiosis and mitosis. Component of the inner kinetochore constitutive centromere-associated network (CCAN), which serves as a structural platform for outer kinetochore assembly. The chain is Inner kinetochore subunit fta6 (fta6) from Schizosaccharomyces pombe (strain 972 / ATCC 24843) (Fission yeast).